The following is a 215-amino-acid chain: Pyridoxine/pyridoxamine 5'-phosphate oxidase (215 aa).

Substrate is bound by residues 9–12 and Lys-69; that span reads RRDY. FMN contacts are provided by residues 64-69, 79-80, Lys-86, and Gln-108; these read RVLLLK and FT. Substrate is bound by residues Tyr-126, Arg-130, and Ser-134. FMN contacts are provided by residues 143–144 and Trp-188; that span reads QS. 194-196 contributes to the substrate binding site; the sequence is RLH. Arg-198 contacts FMN.

The protein belongs to the pyridoxamine 5'-phosphate oxidase family. Homodimer. FMN is required as a cofactor.

It catalyses the reaction pyridoxamine 5'-phosphate + O2 + H2O = pyridoxal 5'-phosphate + H2O2 + NH4(+). It carries out the reaction pyridoxine 5'-phosphate + O2 = pyridoxal 5'-phosphate + H2O2. It functions in the pathway cofactor metabolism; pyridoxal 5'-phosphate salvage; pyridoxal 5'-phosphate from pyridoxamine 5'-phosphate: step 1/1. It participates in cofactor metabolism; pyridoxal 5'-phosphate salvage; pyridoxal 5'-phosphate from pyridoxine 5'-phosphate: step 1/1. Catalyzes the oxidation of either pyridoxine 5'-phosphate (PNP) or pyridoxamine 5'-phosphate (PMP) into pyridoxal 5'-phosphate (PLP). The polypeptide is Pyridoxine/pyridoxamine 5'-phosphate oxidase (Pseudomonas putida (strain GB-1)).